Here is a 104-residue protein sequence, read N- to C-terminus: Protein U9 (104 aa).

A helical membrane pass occupies residues 37 to 54 (GVQGLNADCSYVKSQCIK).

The protein localises to the host membrane. The polypeptide is Protein U9 (U9) (Human herpesvirus 6B (HHV-6 variant B)).